Here is a 372-residue protein sequence, read N- to C-terminus: Tubby-like F-box protein 9 (372 aa).

Residues 1-51 are disordered; the sequence is MALWRCSSSWLSSVSRSSGGVGGGESKVSPEIAPVSGGEGEGEEEEGEEER. Positions 7–18 are enriched in low complexity; the sequence is SSSWLSSVSRSS. Residues 40-49 show a composition bias toward acidic residues; the sequence is GEGEEEEGEE. One can recognise an F-box domain in the interval 50-105; it reads ERWSRLLPELLTEIMRRVDAGAERWPPRRDVVACACVCRRWRDAAVSVVRPPLECG.

Belongs to the TUB family. Ubiquitous.

This chain is Tubby-like F-box protein 9 (TULP9), found in Oryza sativa subsp. japonica (Rice).